Reading from the N-terminus, the 166-residue chain is Phosphopantetheine adenylyltransferase (166 aa).

Thr11 is a binding site for substrate. Residues 11-12 (TF) and His19 each bind ATP. Residues Lys43, Thr79, and Arg93 each contribute to the substrate site. Residues Glu104 and 128–134 (LEPLNST) contribute to the ATP site.

It belongs to the bacterial CoaD family. Homohexamer. Requires Mg(2+) as cofactor.

It is found in the cytoplasm. It catalyses the reaction (R)-4'-phosphopantetheine + ATP + H(+) = 3'-dephospho-CoA + diphosphate. Its pathway is cofactor biosynthesis; coenzyme A biosynthesis; CoA from (R)-pantothenate: step 4/5. Functionally, reversibly transfers an adenylyl group from ATP to 4'-phosphopantetheine, yielding dephospho-CoA (dPCoA) and pyrophosphate. The sequence is that of Phosphopantetheine adenylyltransferase from Lactococcus lactis subsp. cremoris (strain MG1363).